Here is a 111-residue protein sequence, read N- to C-terminus: Nucleoid-associated protein Cag_1190 (111 aa).

It belongs to the YbaB/EbfC family. In terms of assembly, homodimer.

It localises to the cytoplasm. The protein localises to the nucleoid. Binds to DNA and alters its conformation. May be involved in regulation of gene expression, nucleoid organization and DNA protection. This Chlorobium chlorochromatii (strain CaD3) protein is Nucleoid-associated protein Cag_1190.